The primary structure comprises 1498 residues: Methyl-CpG-binding domain protein 5 (1498 aa).

Residues 11–81 (DKEGGLAAIQ…KVFNFDPGAA (71 aa)) form the MBD domain. The interval 57–68 (DGTCKCGLECPL) is required for interaction with ASXL1/2/3. Disordered regions lie at residues 199–274 (PRQR…TPLS), 329–350 (HHKP…QKKP), 452–521 (RIEA…YKDI), 594–642 (LAGN…SGRA), and 1350–1377 (NGCV…PSSH). Residues 333–343 (PQGPPPPPPPS) are compositionally biased toward pro residues. 2 stretches are compositionally biased toward low complexity: residues 499–511 (SPRP…PSTK) and 594–613 (LAGN…SSGN). The segment covering 614–624 (TEGHSTLNTMF) has biased composition (polar residues). One can recognise a PWWP domain in the interval 1385–1409 (RTFNVGDLVWGQIKGLTSWPGKFIR). The tract at residues 1473 to 1498 (SGTVHQIPQGDRQMRPPKPKRRKISR) is disordered. Basic residues predominate over residues 1487 to 1498 (RPPKPKRRKISR).

In terms of assembly, core component of the polycomb repressive deubiquitinase (PR-DUB) complex, at least composed of BAP1, one of ASXL1, ASXL2 or (probably) ASXL3, and one of MBD5 or MBD6. Distinct combinations of ASXL and MBD proteins may preferentially bind specific histone modification marks. The PR-DUB core associates with a number of accessory proteins, including FOXK1, FOXK2, KDM1B, HCFC1 and OGT; KDM1B specifically associates with ASXL2 PR-DUB complexes. Interacts (via MBD domain) with ASXL1, ASXL2 and ASXL3 (via PHD domain); the interaction is probably direct, mediates association with other PR-DUB complex core components. In terms of tissue distribution, expressed at highest levels in adult testis and Brain. Expressed at highest levels in the oocyte.

It localises to the nucleus. The protein localises to the chromosome. In terms of biological role, non-catalytic component of the polycomb repressive deubiquitinase (PR-DUB) complex, a complex that specifically mediates deubiquitination of histone H2A monoubiquitinated at 'Lys-120' (H2AK119ub1). Important for stability of PR-DUB components and stimulating its ubiquitinase activity. As part of the PR-DUB complex, associates with chromatin enriched in histone marks H3K4me1, H3K4me3, and H3K27Ac, but not in H3K27me3. The PR-DUB complex is an epigenetic regulator of gene expression, including genes involved in cell growth and survivability. MBD5 and MBD6 containing complexes associate with distinct chromatin regions enriched in genes involved in different pathways. Heterochromatin recruitment is not mediated by DNA methylation. The PR-DUB complex is an epigenetic regulator of gene expression, including genes involved in development, cell communication, signaling, cell proliferation and cell viability. In Mus musculus (Mouse), this protein is Methyl-CpG-binding domain protein 5 (Mbd5).